The primary structure comprises 369 residues: Protein FAM187B (369 aa).

An N-terminal signal peptide occupies residues 1 to 17 (MPPMLWLLLHFAAPALG). Residues 18-335 (FYFSISCPSG…RADSVLKGLK (318 aa)) are Extracellular-facing. Asparagine 45, asparagine 68, and asparagine 130 each carry an N-linked (GlcNAc...) asparagine glycan. A helical transmembrane segment spans residues 336 to 356 (LVLLVVTVLALLGALLKCIHP). Topologically, residues 357–369 (SPGRRSTQVLVVK) are cytoplasmic.

It belongs to the FAM187 family.

It localises to the membrane. This Homo sapiens (Human) protein is Protein FAM187B (FAM187B).